Reading from the N-terminus, the 599-residue chain is Adenine deaminase (599 aa).

Belongs to the metallo-dependent hydrolases superfamily. Adenine deaminase family. Requires Mn(2+) as cofactor.

The enzyme catalyses adenine + H2O + H(+) = hypoxanthine + NH4(+). This Clostridium botulinum (strain ATCC 19397 / Type A) protein is Adenine deaminase.